The chain runs to 93 residues: Small ribosomal subunit protein uS19 (93 aa).

The protein belongs to the universal ribosomal protein uS19 family.

Functionally, protein S19 forms a complex with S13 that binds strongly to the 16S ribosomal RNA. The sequence is that of Small ribosomal subunit protein uS19 (rpsS) from Helicobacter pylori (strain ATCC 700392 / 26695) (Campylobacter pylori).